The chain runs to 697 residues: Testis-specific gene 10 protein (697 aa).

The segment at 556-688 (QMTNERISMQ…SPDRGLDRSL (133 aa)) is interaction with HIF1A. The tract at residues 656-684 (NAYNLGPMKPNTKCHSPERAHHRSPDRGL) is disordered. The span at 670-684 (HSPERAHHRSPDRGL) shows a compositional bias: basic and acidic residues. Ser-687 is subject to Phosphoserine.

This sequence belongs to the CEP135/TSGA10 family. In terms of assembly, interacts with HIF1A. Processed into N-terminal 27-kDa and C-terminal 55-kDa fragments. As to expression, predominantly expressed in testis, in spermatozoa (at protein level). Not detected in Leydig cells. The N-terminal 27-kDa fragment is also detected in liver, while the C-terminal 55-kDa fragment is also found retina, brain and kidney (at protein level).

The protein resides in the cytoplasm. The protein localises to the cytoskeleton. It is found in the microtubule organizing center. Its subcellular location is the centrosome. It localises to the centriole. Plays a role in spermatogenesis. When overexpressed, prevents nuclear localization of HIF1A. The polypeptide is Testis-specific gene 10 protein (Tsga10) (Mus musculus (Mouse)).